The chain runs to 418 residues: NADH-quinone oxidoreductase subunit D (418 aa).

Belongs to the complex I 49 kDa subunit family. As to quaternary structure, NDH-1 is composed of 14 different subunits. Subunits NuoB, C, D, E, F, and G constitute the peripheral sector of the complex.

The protein resides in the cell inner membrane. The enzyme catalyses a quinone + NADH + 5 H(+)(in) = a quinol + NAD(+) + 4 H(+)(out). Functionally, NDH-1 shuttles electrons from NADH, via FMN and iron-sulfur (Fe-S) centers, to quinones in the respiratory chain. The immediate electron acceptor for the enzyme in this species is believed to be ubiquinone. Couples the redox reaction to proton translocation (for every two electrons transferred, four hydrogen ions are translocated across the cytoplasmic membrane), and thus conserves the redox energy in a proton gradient. This Methylacidiphilum infernorum (isolate V4) (Methylokorus infernorum (strain V4)) protein is NADH-quinone oxidoreductase subunit D.